Reading from the N-terminus, the 868-residue chain is Muscle, skeletal receptor tyrosine-protein kinase (868 aa).

An N-terminal signal peptide occupies residues 1–21 (MRELVNIPLLQMLTLVAFSGT). At 22–494 (EKLPKAPVIT…FAVSPAYSMT (473 aa)) the chain is on the extracellular side. 3 consecutive Ig-like domains span residues 28–116 (PVIT…GALQ), 121–205 (PKIT…KLVK), and 212–302 (ARIL…ATVS). 3 cysteine pairs are disulfide-bonded: C49-C99, C98-C112, and C142-C190. Residue N222 is glycosylated (N-linked (GlcNAc...) asparagine). 6 cysteine pairs are disulfide-bonded: C233–C282, C317–C382, C325–C375, C366–C406, C394–C447, and C398–C434. The FZ domain maps to 312 to 450 (DSQGYCAQYR…HRDPTACTRL (139 aa)). N338 is a glycosylation site (N-linked (GlcNAc...) asparagine). Residue N459 is glycosylated (N-linked (GlcNAc...) asparagine). The chain crosses the membrane as a helical span at residues 495–515 (VIISIVSSFALFALLTIATLY). Topologically, residues 516–868 (CCRRRKEWKN…CERAEGTVGV (353 aa)) are cytoplasmic. Y553 carries the post-translational modification Phosphotyrosine; by autocatalysis. The Protein kinase domain occupies 574–855 (IEYVRDIGEG…PSFCSIHRIL (282 aa)). Residues 580–588 (IGEGAFGRV) and K608 each bind ATP. Phosphoserine; by CK2 is present on residues S680 and S697. Residue D724 is the Proton acceptor of the active site. Y754 is subject to Phosphotyrosine; by autocatalysis.

Belongs to the protein kinase superfamily. Tyr protein kinase family. Monomer. Homodimer. Interacts with LRP4; the heterodimer forms an AGRIN receptor complex that binds AGRIN resulting in activation of MUSK. Forms a heterotetramer composed of 2 DOK7 and 2 MUSK molecules which facilitates MUSK trans-autophosphorylation on tyrosine residue and activation. Interacts (via cytoplasmic part) with DOK7 (via IRS-type PTB domain); requires MUSK phosphorylation. Interacts with DVL1 (via DEP domain); the interaction is direct and mediates the formation of a DVL1, MUSK and PAK1 ternary complex involved in AChR clustering. Interacts with PDZRN3; this interaction is enhanced by agrin. Interacts with FNTA; the interaction is direct and mediates AGRIN-induced phosphorylation and activation of FNTA. Interacts with CSNK2B; mediates regulation by CK2. Interacts (via the cytoplasmic domain) with DNAJA3. Interacts with NSF; may regulate MUSK endocytosis and activity. Interacts with CAV3; may regulate MUSK signaling. Interacts with RNF31. Mg(2+) is required as a cofactor. Post-translationally, ubiquitinated by PDZRN3. Ubiquitination promotes endocytosis and lysosomal degradation. Phosphorylated. Phosphorylation is induced by AGRIN. Autophosphorylated. Autophosphorylation at Tyr-553 is required for interaction with DOK7 which in turn stimulates the phosphorylation and the activation of MUSK. In terms of processing, neddylated. As to expression, expressed preferentially in skeletal muscle.

The protein localises to the postsynaptic cell membrane. The catalysed reaction is L-tyrosyl-[protein] + ATP = O-phospho-L-tyrosyl-[protein] + ADP + H(+). Its activity is regulated as follows. Positively regulated by CK2. Functionally, receptor tyrosine kinase which plays a central role in the formation and the maintenance of the neuromuscular junction (NMJ), the synapse between the motor neuron and the skeletal muscle. Recruitment of AGRIN by LRP4 to the MUSK signaling complex induces phosphorylation and activation of MUSK, the kinase of the complex. The activation of MUSK in myotubes regulates the formation of NMJs through the regulation of different processes including the specific expression of genes in subsynaptic nuclei, the reorganization of the actin cytoskeleton and the clustering of the acetylcholine receptors (AChR) in the postsynaptic membrane. May regulate AChR phosphorylation and clustering through activation of ABL1 and Src family kinases which in turn regulate MUSK. DVL1 and PAK1 that form a ternary complex with MUSK are also important for MUSK-dependent regulation of AChR clustering. May positively regulate Rho family GTPases through FNTA. Mediates the phosphorylation of FNTA which promotes prenylation, recruitment to membranes and activation of RAC1 a regulator of the actin cytoskeleton and of gene expression. Other effectors of the MUSK signaling include DNAJA3 which functions downstream of MUSK. May also play a role within the central nervous system by mediating cholinergic responses, synaptic plasticity and memory formation. In Mus musculus (Mouse), this protein is Muscle, skeletal receptor tyrosine-protein kinase (Musk).